The primary structure comprises 201 residues: Pyridoxine/pyridoxamine 5'-phosphate oxidase (201 aa).

Residues arginine 49–lysine 54, tyrosine 64–threonine 65, lysine 71, and glutamine 93 contribute to the FMN site. Lysine 54 contacts substrate. Substrate contacts are provided by tyrosine 111, arginine 115, and serine 119. FMN contacts are provided by residues glutamine 128 to serine 129 and tryptophan 172. Substrate is bound at residue arginine 178–histidine 180. Arginine 182 provides a ligand contact to FMN.

Belongs to the pyridoxamine 5'-phosphate oxidase family. In terms of assembly, homodimer. It depends on FMN as a cofactor.

It carries out the reaction pyridoxamine 5'-phosphate + O2 + H2O = pyridoxal 5'-phosphate + H2O2 + NH4(+). The catalysed reaction is pyridoxine 5'-phosphate + O2 = pyridoxal 5'-phosphate + H2O2. Its pathway is cofactor metabolism; pyridoxal 5'-phosphate salvage; pyridoxal 5'-phosphate from pyridoxamine 5'-phosphate: step 1/1. It participates in cofactor metabolism; pyridoxal 5'-phosphate salvage; pyridoxal 5'-phosphate from pyridoxine 5'-phosphate: step 1/1. Catalyzes the oxidation of either pyridoxine 5'-phosphate (PNP) or pyridoxamine 5'-phosphate (PMP) into pyridoxal 5'-phosphate (PLP). The polypeptide is Pyridoxine/pyridoxamine 5'-phosphate oxidase (Ruegeria sp. (strain TM1040) (Silicibacter sp.)).